The primary structure comprises 943 residues: Translation initiation factor IF-2 (943 aa).

The tract at residues 35–359 (MSSIDQDQEA…MPQRKERPLP (325 aa)) is disordered. Positions 57-76 (KAPSSQAAKTPAKAAKTSSA) are enriched in low complexity. Composition is skewed to basic and acidic residues over residues 92-103 (SNDHADAAEHSQ) and 110-124 (AKQE…KTSD). Positions 130 to 141 (SKSTILRPRSTQ) are enriched in polar residues. Residues 142–190 (TAHTNTNHNRGGNTASANNTANGRNSNRSNNNNNNRSANNANRSGNNNR) are compositionally biased toward low complexity. Composition is skewed to basic and acidic residues over residues 191-205 (SNER…RFDN), 239-250 (ASERQQPKRQEA), and 259-271 (KRSE…RPRT). 2 stretches are compositionally biased toward low complexity: residues 289-299 (PAAAAPKPASA) and 315-330 (NFGR…GFNR). A compositionally biased stretch (basic residues) spans 331–342 (NNRRNKKNKRRQ). Residues 346–358 (PKKEMPQRKERPL) show a composition bias toward basic and acidic residues. Positions 444 to 613 (PRPPVVTIMG…LLEADVLELK (170 aa)) constitute a tr-type G domain. Positions 453-460 (GHVDHGKT) are G1. A GTP-binding site is contributed by 453-460 (GHVDHGKT). The interval 478 to 482 (GITQH) is G2. The tract at residues 499 to 502 (DTPG) is G3. GTP-binding positions include 499–503 (DTPGH) and 553–556 (NKID). Residues 553–556 (NKID) are G4. A G5 region spans residues 589–591 (SAK).

This sequence belongs to the TRAFAC class translation factor GTPase superfamily. Classic translation factor GTPase family. IF-2 subfamily.

Its subcellular location is the cytoplasm. In terms of biological role, one of the essential components for the initiation of protein synthesis. Protects formylmethionyl-tRNA from spontaneous hydrolysis and promotes its binding to the 30S ribosomal subunits. Also involved in the hydrolysis of GTP during the formation of the 70S ribosomal complex. The protein is Translation initiation factor IF-2 of Lacticaseibacillus paracasei (strain ATCC 334 / BCRC 17002 / CCUG 31169 / CIP 107868 / KCTC 3260 / NRRL B-441) (Lactobacillus paracasei).